A 951-amino-acid chain; its full sequence is Translation initiation factor IF-2 (951 aa).

2 disordered regions span residues 58–255 (AERK…AVVI) and 305–329 (DVSRDKRRGRQPGRPISEEQAKSLS). The segment covering 101 to 170 (AEPQYAEPQQ…PQAQPAQPAA (70 aa)) has biased composition (low complexity). Positions 171–216 (PVAPPAPSAQPSAPQPPAAQPRPPQPPMPSRPPPAGYRPAPPPGAR) are enriched in pro residues. A compositionally biased stretch (low complexity) spans 217–234 (PPMSAAPGAPAQPGAAGQ). The region spanning 450-619 (IRPPVVTVMG…ALQSEVLELK (170 aa)) is the tr-type G domain. The segment at 459–466 (GHVDHGKT) is G1. Residue 459–466 (GHVDHGKT) coordinates GTP. Residues 484-488 (GITQH) are G2. Residues 505 to 508 (DTPG) are G3. GTP-binding positions include 505–509 (DTPGH) and 559–562 (NKVD). The G4 stretch occupies residues 559-562 (NKVD). The segment at 595–597 (SAR) is G5.

The protein belongs to the TRAFAC class translation factor GTPase superfamily. Classic translation factor GTPase family. IF-2 subfamily.

It localises to the cytoplasm. In terms of biological role, one of the essential components for the initiation of protein synthesis. Protects formylmethionyl-tRNA from spontaneous hydrolysis and promotes its binding to the 30S ribosomal subunits. Also involved in the hydrolysis of GTP during the formation of the 70S ribosomal complex. In Anaeromyxobacter dehalogenans (strain 2CP-1 / ATCC BAA-258), this protein is Translation initiation factor IF-2.